We begin with the raw amino-acid sequence, 918 residues long: Protein SEY1 homolog (918 aa).

Over 1–701 (MESSNHLPNK…AGTSVSSWRN (701 aa)) the chain is Cytoplasmic. Positions 46–280 (GFKFNVVTIL…VPSDGFFVYS (235 aa)) constitute a GB1/RHD3-type G domain. A GTP-binding site is contributed by 56-63 (GSQSSGKS). Residues 554 to 626 (SLVLLLKATQ…DALTLLQVLK (73 aa)) adopt a coiled-coil conformation. The helical transmembrane segment at 702–722 (IPPVFWLVLLVLGWNELRAAF) threads the bilayer. Residues 723–725 (RVL) are Lumenal-facing. A helical membrane pass occupies residues 726–746 (LKFYILIPLLIVSYFTFSYSA). Topologically, residues 747–918 (NKLLGPKANE…CGKAVHLAQW (172 aa)) are cytoplasmic.

It belongs to the TRAFAC class dynamin-like GTPase superfamily. GB1/RHD3 GTPase family. RHD3 subfamily.

It is found in the endoplasmic reticulum membrane. Functionally, probable GTP-binding protein that may be involved in cell development. The sequence is that of Protein SEY1 homolog from Theileria annulata.